The chain runs to 500 residues: Low-density lipoprotein receptor-related protein 11 (500 aa).

Positions M1–A37 are cleaved as a signal peptide. Residues A38–G450 are Extracellular-facing. The MANSC domain occupies A99–Y184. N-linked (GlcNAc...) asparagine glycosylation is found at N164 and N291. The PKD domain maps to P210 to G305. In terms of domain architecture, LDL-receptor class A spans T309 to Q345. 3 cysteine pairs are disulfide-bonded: C310–C322, C317–C335, and C329–C344. The interval A358 to P445 is disordered. The N-linked (GlcNAc...) asparagine glycan is linked to N401. Residues A451–L473 form a helical membrane-spanning segment. Residues R474–L500 are Cytoplasmic-facing. Residue S491 is modified to Phosphoserine.

This sequence belongs to the LDLR family.

The protein resides in the membrane. The sequence is that of Low-density lipoprotein receptor-related protein 11 (LRP11) from Homo sapiens (Human).